The sequence spans 532 residues: ATP-dependent RNA helicase DBP3 (532 aa).

Residues 1-78 form a disordered region; that stretch reads MGKRDRTEDD…EVAEEKPKMT (78 aa). Basic residues predominate over residues 15–58; the sequence is KKVKLDKKDKKEKKEKKDKKDKKDKKDKKDKKDKKEKKEKKEKK. Positions 126 to 152 match the Q motif motif; it reads MEFSHVTLDPRITKVLTKFPRPTPIQA. The 173-residue stretch at 155-327 folds into the Helicase ATP-binding domain; it reads WPYLLAGKDM…EGFMKTPTKV (173 aa). 168 to 175 serves as a coordination point for ATP; sequence AETGSGKT. Positions 274-277 match the DEAD box motif; the sequence is DEAD. The Helicase C-terminal domain occupies 356–502; sequence RLLDLLRQYA…PVPDELLKFG (147 aa).

This sequence belongs to the DEAD box helicase family. DDX5/DBP2 subfamily.

It is found in the nucleus. The protein resides in the nucleolus. The catalysed reaction is ATP + H2O = ADP + phosphate + H(+). Functionally, ATP-dependent RNA helicase required for 60S ribosomal subunit synthesis. Involved in efficient pre-rRNA processing, predominantly at site A3, which is necessary for the normal formation of 25S and 5.8S rRNAs. The polypeptide is ATP-dependent RNA helicase DBP3 (DBP3) (Yarrowia lipolytica (strain CLIB 122 / E 150) (Yeast)).